The following is a 405-amino-acid chain: uncharacterized protein (405 aa).

Residues 1-18 (MPEPVAEPALNGLRLNLR) are Cytoplasmic-facing. Residues 19 to 39 (IVSIVMFNFASYLTIGLPLAV) traverse the membrane as a helical segment. Residues 40-46 (LPGYVHD) lie on the Periplasmic side of the membrane. The chain crosses the membrane as a helical span at residues 47–67 (VMGFSAFWAGLVISLQYFATL). The Cytoplasmic portion of the chain corresponds to 68-84 (LSRPHAGRYADSLGPKK). Residues 85-105 (IVVFGLCGCFLSGLGYLTAGL) form a helical membrane-spanning segment. Position 106 (T106) is a topological domain, periplasmic. Residues 107–127 (ASLPVISLLLLCLGRVILGIG) traverse the membrane as a helical segment. Residues 128-155 (QSFAGTGSTLWGVGVVGSLHIGRVISWN) are Cytoplasmic-facing. Residues 156–176 (GIVTYGAMAMGAPLGVVFYHW) form a helical membrane-spanning segment. Position 177 (G177) is a topological domain, periplasmic. The helical transmembrane segment at 178-198 (GLQALALIIMGVALVAILLAI) threads the bilayer. Residues 199–223 (PRPTVKASKGKPLPFRAVLGRVWLY) lie on the Cytoplasmic side of the membrane. Residues 224–244 (GMALALASAGFGVIATFITLF) traverse the membrane as a helical segment. At 245-251 (YDAKGWD) the chain is on the periplasmic side. A helical membrane pass occupies residues 252–272 (GAAFALTLFSCAFVGTRLLFP). Over 273-282 (NGINRIGGLN) the chain is Cytoplasmic. A helical transmembrane segment spans residues 283–303 (VAMICFSVEIIGLLLVGVATM). Residues 304 to 308 (PWMAK) are Periplasmic-facing. Residues 309-329 (IGVLLAGAGFSLVFPALGVVA) form a helical membrane-spanning segment. The Cytoplasmic portion of the chain corresponds to 330–343 (VKAVPQQNQGAALA). A helical membrane pass occupies residues 344–364 (TYTVFMDLSLGVTGPLAGLVM). S365 is a topological domain (periplasmic). Residues 366 to 386 (WAGVPVIYLAAAGLVAIALLL) form a helical membrane-spanning segment. At 387 to 405 (TWRLKKRPPEHVPEAASSS) the chain is on the cytoplasmic side.

The protein belongs to the major facilitator superfamily. YhhS family.

It localises to the cell inner membrane. Functionally, confers high-level resistance to glyphosate when overexpressed. Overexpression has no effect on intracellular arabinose concentrations. This is an uncharacterized protein from Escherichia coli (strain K12).